The sequence spans 145 residues: uncharacterized protein (145 aa).

A disordered region spans residues 1–59 (MSTGTPHYAADRSKSRKSNNNRSIPFRTPTTQKVVKTSIRLGPVNPPTPTRNTQGGHGF).

This is an uncharacterized protein from Caenorhabditis elegans.